Reading from the N-terminus, the 323-residue chain is ADP/ATP translocase 4 (323 aa).

The Mitochondrial intermembrane portion of the chain corresponds to 1–23 (MQREPPKRKQEKKVEKGLFDATS). The stretch at 22–114 (TSFGKDLLAG…FAFKDKYKQL (93 aa)) is one Solcar 1 repeat. The chain crosses the membrane as a helical span at residues 24–53 (FGKDLLAGGVAAAVSKTTVAPIERVKLLLQ). Over 54–90 (VQASSKQISPEAQYKGIVDCLVRIPREQGFLSYWRGN) the chain is Mitochondrial matrix. Residues 91 to 115 (LANVIRYFPTQALNFAFKDKYKQLF) traverse the membrane as a helical segment. ADP is bound by residues R96 and K108. The Mitochondrial intermembrane portion of the chain corresponds to 116-125 (MSGVNKEKQF). A helical transmembrane segment spans residues 126-146 (WRWFLANLASGGAAGATSLCV). 2 Solcar repeats span residues 127 to 217 (RWFL…VKGL) and 224 to 311 (THFL…IKDL). The Mitochondrial matrix portion of the chain corresponds to 147–194 (VYPLDFARTRLGADIGKGPEERQFKGLGDCIMKIAKSDGIVGLYQGFG). Residues 195-215 (VSVQGIIVYRASYFGAYDTVK) traverse the membrane as a helical segment. Residues 216 to 226 (GLLPKPKETHF) lie on the Mitochondrial intermembrane side of the membrane. The helical transmembrane segment at 227–247 (LVSFFIAQVVTTCSGILSYPF) threads the bilayer. Residues 248 to 287 (DTVRRRMMMQSGEAERQYKGTLDCFMKIYQQEGIGAFFRG) lie on the Mitochondrial matrix side of the membrane. R251 is a binding site for ADP. An important for transport activity region spans residues 251-256 (RRRMMM). The short motif at 251-256 (RRRMMM) is the Nucleotide carrier signature motif element. Residues 288–305 (AFSNILRGTGGALVLVLY) traverse the membrane as a helical segment. Residues 306 to 323 (DKIKDLLNIDIGGSSSGD) are Mitochondrial intermembrane-facing.

Belongs to the mitochondrial carrier (TC 2.A.29) family. Monomer.

It localises to the mitochondrion inner membrane. The protein resides in the membrane. The protein localises to the cell projection. Its subcellular location is the cilium. It is found in the flagellum membrane. The catalysed reaction is ADP(in) + ATP(out) = ADP(out) + ATP(in). The enzyme catalyses dATP(out) + ADP(in) = dATP(in) + ADP(out). It carries out the reaction dADP(in) + ADP(out) = dADP(out) + ADP(in). It catalyses the reaction H(+)(in) = H(+)(out). Its activity is regulated as follows. The matrix-open state (m-state) is inhibited by the membrane-permeable bongkrekic acid (BKA). The cytoplasmic-open state (c-state) is inhibited by the membrane-impermeable toxic inhibitor carboxyatractyloside (CATR). Proton transporter activity is inhibited by ADP:ATP antiporter activity. ADP:ATP antiporter that mediates import of ADP into the mitochondrial matrix for ATP synthesis, and export of ATP out to fuel the cell. Cycles between the cytoplasmic-open state (c-state) and the matrix-open state (m-state): operates by the alternating access mechanism with a single substrate-binding site intermittently exposed to either the cytosolic (c-state) or matrix (m-state) side of the inner mitochondrial membrane. Specifically required during spermatogenesis, probably to mediate ADP:ATP exchange in spermatocytes. Large ATP supplies from mitochondria may be critical for normal progression of spermatogenesis during early stages of meiotic prophase I, including DNA double-strand break repair and chromosomal synapsis. In addition to its ADP:ATP antiporter activity, also involved in mitochondrial uncoupling and mitochondrial permeability transition pore (mPTP) activity. Plays a role in mitochondrial uncoupling by acting as a proton transporter: proton transport uncouples the proton flows via the electron transport chain and ATP synthase to reduce the efficiency of ATP production and cause mitochondrial thermogenesis. Proton transporter activity is inhibited by ADP:ATP antiporter activity, suggesting that SLC25A31/ANT4 acts as a master regulator of mitochondrial energy output by maintaining a delicate balance between ATP production (ADP:ATP antiporter activity) and thermogenesis (proton transporter activity). Proton transporter activity requires free fatty acids as cofactor, but does not transport it. Among nucleotides, may also exchange ADP for dATP and dADP. Also plays a key role in mPTP opening, a non-specific pore that enables free passage of the mitochondrial membranes to solutes of up to 1.5 kDa, and which contributes to cell death. It is however unclear if SLC25A31/ANT4 constitutes a pore-forming component of mPTP or regulates it. This Bos taurus (Bovine) protein is ADP/ATP translocase 4.